Consider the following 537-residue polypeptide: Cytoplasmic dynein 2 intermediate chain 2 (537 aa).

A Phosphoserine modification is found at serine 15. Positions 80-93 are DYNLL2 binding; that stretch reads RTHADAQVQTEAPE. Positions 107–132 are DYNLRB1 binding; the sequence is LRLEAFLRRVEAMVIRELNNNWQSHA. 5 WD repeats span residues 216–256, 265–309, 391–431, 434–474, and 481–521; these read EVPS…DPLL, THTD…QLRL, PHGG…PLTS, LSHK…QKPT, and QDGS…TEQG.

Belongs to the dynein light intermediate chain family. As to quaternary structure, the cytoplasmic dynein 2 complex consists of two catalytic heavy chains (HCs) and a number of non-catalytic subunits presented by intermediate chains (ICs), light intermediate chains (LICs) and light chains (LCs). Among them, a heavy chain (DYNC2H1), two intermediate chains (DYNC2I2 and DYNC2I1), a light intermediate chain (DYNC2LI1), and a light chain (DYNLT2B) are unique to the cytoplasmic dynein complex 2, but a subset of the light chains are also shared by dynein-1 and dynein-2 complexes. Interacts with DYNC2I1; their C-terminal domains each bind a copy of the heavy chain, and their extended N-terminal regions are held together by an array of light chain dimers. Interacts with DYNLL2; this interaction is essential for dynein-2-mediated retrograde trafficking of ciliary proteins. Interacts with DYNLRB1; this interaction is essential for dynein-2-mediated retrograde trafficking of ciliary proteins. Interacts (via the WD domains) with MAP3K7 and TAB3. Interacts (via WD domains) with TAB2 (via C-terminus). Interacts (via WD domains) with TRAF6 (via TRAF-type domains). As to expression, expressed in brain, thymus, heart, lung, liver, spleen, kidney, testis and intestine.

It is found in the cytoplasm. The protein resides in the cytoskeleton. The protein localises to the cilium basal body. It localises to the cilium axoneme. Its subcellular location is the cell projection. It is found in the cilium. The protein resides in the microtubule organizing center. The protein localises to the centrosome. It localises to the filopodium. Its function is as follows. Acts as one of several non-catalytic accessory components of the cytoplasmic dynein 2 complex (dynein-2 complex), a motor protein complex that drives the movement of cargos along microtubules within cilia and flagella in concert with the intraflagellar transport (IFT) system. DYNC2I2 plays a major role in retrograde ciliary protein trafficking and in ciliogenesis. Required also to maintain a functional transition zone. In terms of biological role, acts as a negative regulator of the Toll-like and IL-1R receptor signaling pathways. Inhibits the MAP3K7-induced NF-kappa-B activation pathway. Inhibits MAP3K7 phosphorylation at 'Thr-184' and 'Thr-187' upon Il-1 beta stimulation. This is Cytoplasmic dynein 2 intermediate chain 2 (Dync2i2) from Mus musculus (Mouse).